Consider the following 411-residue polypeptide: Phosphopentomutase (411 aa).

Mn(2+) contacts are provided by Asp14, Asp306, His311, Asp347, His348, and His359.

The protein belongs to the phosphopentomutase family. Mn(2+) is required as a cofactor.

Its subcellular location is the cytoplasm. It carries out the reaction 2-deoxy-alpha-D-ribose 1-phosphate = 2-deoxy-D-ribose 5-phosphate. It catalyses the reaction alpha-D-ribose 1-phosphate = D-ribose 5-phosphate. The protein operates within carbohydrate degradation; 2-deoxy-D-ribose 1-phosphate degradation; D-glyceraldehyde 3-phosphate and acetaldehyde from 2-deoxy-alpha-D-ribose 1-phosphate: step 1/2. In terms of biological role, isomerase that catalyzes the conversion of deoxy-ribose 1-phosphate (dRib-1-P) and ribose 1-phosphate (Rib-1-P) to deoxy-ribose 5-phosphate (dRib-5-P) and ribose 5-phosphate (Rib-5-P), respectively. The chain is Phosphopentomutase from Lactococcus lactis subsp. cremoris (strain SK11).